A 98-amino-acid chain; its full sequence is DNA-directed RNA polymerase subunit omega (98 aa).

This sequence belongs to the RNA polymerase subunit omega family. In terms of assembly, the RNAP catalytic core consists of 2 alpha, 1 beta, 1 beta' and 1 omega subunit. When a sigma factor is associated with the core the holoenzyme is formed, which can initiate transcription.

It catalyses the reaction RNA(n) + a ribonucleoside 5'-triphosphate = RNA(n+1) + diphosphate. Promotes RNA polymerase assembly. Latches the N- and C-terminal regions of the beta' subunit thereby facilitating its interaction with the beta and alpha subunits. This Tropheryma whipplei (strain Twist) (Whipple's bacillus) protein is DNA-directed RNA polymerase subunit omega.